We begin with the raw amino-acid sequence, 613 residues long: Coiled-coil domain-containing protein 116 (613 aa).

A disordered region spans residues 41–68 (KPGRVPHPPSTCGSSALQGQRRNKRHPQ). The segment covering 51 to 60 (TCGSSALQGQ) has biased composition (polar residues). A coiled-coil region spans residues 79-104 (ESQVLDSLETVVEKATERMAAMKTEA). Disordered regions lie at residues 329–395 (CRDG…AQVA), 509–541 (RQASRLSTSHCSTETPSVQQEPATHTAQDQATE), and 565–613 (MSAC…EDGV). Ser386 bears the Phosphoserine mark. Over residues 512-539 (SRLSTSHCSTETPSVQQEPATHTAQDQA) the composition is skewed to polar residues. Positions 577-589 (KSKDMDNEGRDKA) are enriched in basic and acidic residues. The segment covering 590–613 (EIEDEDEDEFKDEDQDEDKDEDGV) has biased composition (acidic residues).

The protein resides in the cytoplasm. The protein localises to the cytoskeleton. Its subcellular location is the microtubule organizing center. It is found in the centrosome. This Homo sapiens (Human) protein is Coiled-coil domain-containing protein 116 (CCDC116).